Reading from the N-terminus, the 112-residue chain is Large ribosomal subunit protein uL18 (112 aa).

It belongs to the universal ribosomal protein uL18 family. Part of the 50S ribosomal subunit; part of the 5S rRNA/L5/L18/L25 subcomplex. Contacts the 5S and 23S rRNAs.

Functionally, this is one of the proteins that bind and probably mediate the attachment of the 5S RNA into the large ribosomal subunit, where it forms part of the central protuberance. The polypeptide is Large ribosomal subunit protein uL18 (Thermus thermophilus (strain ATCC BAA-163 / DSM 7039 / HB27)).